We begin with the raw amino-acid sequence, 158 residues long: MKQIPMTVRGADKLREELDYLKGVRRPKIISDIADAREHGDLKENAEYHAAREQQGFCEGRIQEIEAKLSNAQVIDITKMPNNGRVIFGATVRVLNLNTEEEQNYRIVGDDEADFKQNLISVNSPIARGLIGKEVDDVVVIHTPGGEVEYEILSVEYV.

Belongs to the GreA/GreB family.

In terms of biological role, necessary for efficient RNA polymerase transcription elongation past template-encoded arresting sites. The arresting sites in DNA have the property of trapping a certain fraction of elongating RNA polymerases that pass through, resulting in locked ternary complexes. Cleavage of the nascent transcript by cleavage factors such as GreA or GreB allows the resumption of elongation from the new 3'terminus. GreA releases sequences of 2 to 3 nucleotides. The polypeptide is Transcription elongation factor GreA (Yersinia pestis).